A 37-amino-acid chain; its full sequence is Cytochrome b6-f complex subunit 5 (37 aa).

A helical transmembrane segment spans residues 5 to 25; sequence LLSGIVLGLIVVTLSGLFYAA.

This sequence belongs to the PetG family. As to quaternary structure, the 4 large subunits of the cytochrome b6-f complex are cytochrome b6, subunit IV (17 kDa polypeptide, PetD), cytochrome f and the Rieske protein, while the 4 small subunits are PetG, PetL, PetM and PetN. The complex functions as a dimer.

The protein localises to the cellular thylakoid membrane. Functionally, component of the cytochrome b6-f complex, which mediates electron transfer between photosystem II (PSII) and photosystem I (PSI), cyclic electron flow around PSI, and state transitions. PetG is required for either the stability or assembly of the cytochrome b6-f complex. This Trichormus variabilis (strain ATCC 29413 / PCC 7937) (Anabaena variabilis) protein is Cytochrome b6-f complex subunit 5.